A 441-amino-acid polypeptide reads, in one-letter code: Aminopeptidase C (441 aa).

Residues cysteine 70, histidine 361, and asparagine 382 contribute to the active site.

It belongs to the peptidase C1 family.

It catalyses the reaction Inactivates bleomycin B2 (a cytotoxic glycometallopeptide) by hydrolysis of a carboxyamide bond of beta-aminoalanine, but also shows general aminopeptidase activity. The specificity varies somewhat with source, but amino acid arylamides of Met, Leu and Ala are preferred.. This is Aminopeptidase C (pepC) from Listeria monocytogenes serovar 1/2a (strain ATCC BAA-679 / EGD-e).